A 442-amino-acid polypeptide reads, in one-letter code: Armadillo-like helical domain containing protein 1 (442 aa).

The polypeptide is Armadillo-like helical domain containing protein 1 (Bos taurus (Bovine)).